The chain runs to 284 residues: L-ribulose-5-phosphate 3-epimerase UlaE (284 aa).

This sequence belongs to the L-ribulose-5-phosphate 3-epimerase family.

It catalyses the reaction L-ribulose 5-phosphate = L-xylulose 5-phosphate. The protein operates within cofactor degradation; L-ascorbate degradation; D-xylulose 5-phosphate from L-ascorbate: step 3/4. Functionally, catalyzes the isomerization of L-xylulose-5-phosphate to L-ribulose-5-phosphate. Is involved in the anaerobic L-ascorbate utilization. In Salmonella paratyphi A (strain AKU_12601), this protein is L-ribulose-5-phosphate 3-epimerase UlaE.